The chain runs to 317 residues: Olfactory receptor 10A5 (317 aa).

Residues 1 to 26 lie on the Extracellular side of the membrane; sequence MAIGNWTEISEFILMSFSSLPTEIQS. Asn-5 is a glycosylation site (N-linked (GlcNAc...) asparagine). Residues 27–47 traverse the membrane as a helical segment; it reads LLFLTFLTIYLVTLKGNSLII. Residues 48–55 are Cytoplasmic-facing; it reads LVTLADPM. Residues 56–76 traverse the membrane as a helical segment; it reads LHSPMYFFLRNLSFLEIGFNL. The Extracellular portion of the chain corresponds to 77–100; the sequence is VIVPKMLGTLLAQDTTISFLGCAT. A disulfide bond links Cys-98 and Cys-190. Residues 101–121 form a helical membrane-spanning segment; it reads QMYFFFFFGVAECFLLATMAY. Over 122–140 the chain is Cytoplasmic; it reads DRYVAICSPLHYPVIMNQR. A helical transmembrane segment spans residues 141–161; it reads TRAKLAAASWFPGFPVATVQT. The Extracellular portion of the chain corresponds to 162–198; that stretch reads TWLFSFPFCGTNKVNHFFCDSPPVLKLVCADTALFEI. Residues 199 to 218 traverse the membrane as a helical segment; sequence YAIVGTILVVMIPCLLILCS. The Cytoplasmic portion of the chain corresponds to 219 to 238; that stretch reads YTRIAAAILKIPSAKGKHKA. The chain crosses the membrane as a helical span at residues 239–259; sequence FSTCSSHLLVVSLFYISSSLT. Over 260-272 the chain is Extracellular; sequence YFWPKSNNSPESK. A helical transmembrane segment spans residues 273–293; it reads KLLSLSYTVVTPMLNPIIYSL. Residues 294 to 317 lie on the Cytoplasmic side of the membrane; that stretch reads RNSEVKNALSRTFHKVLALRNCIP.

Belongs to the G-protein coupled receptor 1 family. As to expression, expressed in the tongue.

The protein resides in the cell membrane. In terms of biological role, odorant receptor (Potential). May be involved in taste perception. This is Olfactory receptor 10A5 (OR10A5) from Homo sapiens (Human).